Reading from the N-terminus, the 360-residue chain is Photosystem II protein D1 (360 aa).

The next 3 membrane-spanning stretches (helical) occupy residues 29-46 (YIGWFGVLMFPLLLTATT), 118-133 (HFLLGVACYMGREWEL), and 142-156 (WIAVAYSAPVAAATA). Histidine 118 is a binding site for chlorophyll a. Position 126 (tyrosine 126) interacts with pheophytin a. Positions 170 and 189 each coordinate [CaMn4O5] cluster. The helical transmembrane segment at 197–218 (FHMMGVAGVFGGSLFSAMHGSL) threads the bilayer. Residue histidine 198 coordinates chlorophyll a. A quinone-binding positions include histidine 215 and 264–265 (SF). Histidine 215 lines the Fe cation pocket. Histidine 272 is a Fe cation binding site. The helical transmembrane segment at 274–288 (FLALWPVVGIWFTAL) threads the bilayer. Positions 332, 333, 342, and 344 each coordinate [CaMn4O5] cluster. The propeptide occupies 345-360 (SGEVMPVALTAPSINA).

The protein belongs to the reaction center PufL/M/PsbA/D family. As to quaternary structure, PSII is composed of 1 copy each of membrane proteins PsbA, PsbB, PsbC, PsbD, PsbE, PsbF, PsbH, PsbI, PsbJ, PsbK, PsbL, PsbM, PsbT, PsbX, PsbY, PsbZ, Psb30/Ycf12, at least 3 peripheral proteins of the oxygen-evolving complex and a large number of cofactors. It forms dimeric complexes. The D1/D2 heterodimer binds P680, chlorophylls that are the primary electron donor of PSII, and subsequent electron acceptors. It shares a non-heme iron and each subunit binds pheophytin, quinone, additional chlorophylls, carotenoids and lipids. D1 provides most of the ligands for the Mn4-Ca-O5 cluster of the oxygen-evolving complex (OEC). There is also a Cl(-1) ion associated with D1 and D2, which is required for oxygen evolution. The PSII complex binds additional chlorophylls, carotenoids and specific lipids. serves as cofactor. In terms of processing, tyr-161 forms a radical intermediate that is referred to as redox-active TyrZ, YZ or Y-Z. Post-translationally, C-terminally processed by CTPA; processing is essential to allow assembly of the oxygen-evolving complex and thus photosynthetic growth.

It is found in the plastid. The protein localises to the cyanelle thylakoid membrane. It carries out the reaction 2 a plastoquinone + 4 hnu + 2 H2O = 2 a plastoquinol + O2. Functionally, photosystem II (PSII) is a light-driven water:plastoquinone oxidoreductase that uses light energy to abstract electrons from H(2)O, generating O(2) and a proton gradient subsequently used for ATP formation. It consists of a core antenna complex that captures photons, and an electron transfer chain that converts photonic excitation into a charge separation. The D1/D2 (PsbA/PsbD) reaction center heterodimer binds P680, the primary electron donor of PSII as well as several subsequent electron acceptors. This is Photosystem II protein D1 from Cyanophora paradoxa.